Reading from the N-terminus, the 538-residue chain is Sterol esterase 2 (538 aa).

Residues methionine 1–arginine 11 lie on the Cytoplasmic side of the membrane. A helical; Signal-anchor for type II membrane protein transmembrane segment spans residues leucine 12–lysine 32. At asparagine 33–arginine 538 the chain is on the lumenal side. Positions lysine 42 to glutamate 87 are disordered. Basic residues predominate over residues lysine 60–arginine 70. A phosphoserine mark is found at serine 73 and serine 107. Serine 287 acts as the Nucleophile in catalysis. Residues aspartate 480 and histidine 511 each act as charge relay system in the active site.

Belongs to the AB hydrolase superfamily. Not glycosylated.

It localises to the cell membrane. The catalysed reaction is a sterol ester + H2O = a sterol + a fatty acid + H(+). In terms of biological role, mediates the hydrolysis of steryl esters. Required for mobilization of steryl ester, thereby playing a central role in lipid metabolism. The chain is Sterol esterase 2 (YEH2) from Saccharomyces cerevisiae (strain ATCC 204508 / S288c) (Baker's yeast).